The chain runs to 262 residues: Thiazole synthase (262 aa).

Lys98 functions as the Schiff-base intermediate with DXP in the catalytic mechanism. 1-deoxy-D-xylulose 5-phosphate is bound by residues Gly159, 186-187 (AG), and 208-209 (NT).

The protein belongs to the ThiG family. As to quaternary structure, homotetramer. Forms heterodimers with either ThiH or ThiS.

The protein localises to the cytoplasm. It catalyses the reaction [ThiS sulfur-carrier protein]-C-terminal-Gly-aminoethanethioate + 2-iminoacetate + 1-deoxy-D-xylulose 5-phosphate = [ThiS sulfur-carrier protein]-C-terminal Gly-Gly + 2-[(2R,5Z)-2-carboxy-4-methylthiazol-5(2H)-ylidene]ethyl phosphate + 2 H2O + H(+). Its pathway is cofactor biosynthesis; thiamine diphosphate biosynthesis. Catalyzes the rearrangement of 1-deoxy-D-xylulose 5-phosphate (DXP) to produce the thiazole phosphate moiety of thiamine. Sulfur is provided by the thiocarboxylate moiety of the carrier protein ThiS. In vitro, sulfur can be provided by H(2)S. The polypeptide is Thiazole synthase (Hahella chejuensis (strain KCTC 2396)).